A 57-amino-acid polypeptide reads, in one-letter code: UPF0391 membrane protein XOO1885 (57 aa).

The next 2 helical transmembrane spans lie at 4–24 and 33–53; these read WAIIFAIIGLIAGALGFGGMA and FLFWAGIIIAIVLFVLGMTIA.

Belongs to the UPF0391 family.

The protein localises to the cell membrane. In Xanthomonas oryzae pv. oryzae (strain KACC10331 / KXO85), this protein is UPF0391 membrane protein XOO1885.